The following is a 100-amino-acid chain: NADH-quinone oxidoreductase subunit K 2 (100 aa).

3 consecutive transmembrane segments (helical) span residues 4-24 (LWWF…GVLL), 28-48 (ILVV…NFIA), and 60-80 (IFAI…LGIL).

The protein belongs to the complex I subunit 4L family. As to quaternary structure, NDH-1 is composed of 14 different subunits. Subunits NuoA, H, J, K, L, M, N constitute the membrane sector of the complex.

Its subcellular location is the cell inner membrane. The catalysed reaction is a quinone + NADH + 5 H(+)(in) = a quinol + NAD(+) + 4 H(+)(out). Its function is as follows. NDH-1 shuttles electrons from NADH, via FMN and iron-sulfur (Fe-S) centers, to quinones in the respiratory chain. The immediate electron acceptor for the enzyme in this species is believed to be ubiquinone. Couples the redox reaction to proton translocation (for every two electrons transferred, four hydrogen ions are translocated across the cytoplasmic membrane), and thus conserves the redox energy in a proton gradient. This Rhizobium etli (strain CIAT 652) protein is NADH-quinone oxidoreductase subunit K 2.